A 453-amino-acid chain; its full sequence is UPF0210 protein MM_0081 (453 aa).

Belongs to the UPF0210 family.

The polypeptide is UPF0210 protein MM_0081 (Methanosarcina mazei (strain ATCC BAA-159 / DSM 3647 / Goe1 / Go1 / JCM 11833 / OCM 88) (Methanosarcina frisia)).